Consider the following 471-residue polypeptide: DENN domain-containing protein 2D (471 aa).

The region spanning glutamate 55–threonine 204 is the uDENN domain. The cDENN domain occupies histidine 226 to glycine 359. Residues glycine 361 to proline 445 form the dDENN domain.

As to expression, in bronchial mucosa, mainly expressed in ciliated and basal epithelial cells and weakly in alveolar cells (at protein level). Tends to be down-regulated in lung cancers, immortalized bronchial epithelial cell lines and precancerous lesions.

It localises to the cytoplasm. Guanine nucleotide exchange factor (GEF) which may activate RAB9A and RAB9B. Promotes the exchange of GDP to GTP, converting inactive GDP-bound Rab proteins into their active GTP-bound form. This is DENN domain-containing protein 2D (DENND2D) from Homo sapiens (Human).